We begin with the raw amino-acid sequence, 1410 residues long: MAITLTNFTFLYMDANLKRLGDIVLGFGANVVTLLLILILTITRRNGRCNRRKSYIEKCLLYVTPALGACLSCVDLVLLVRTNRRREVILCFVPLSGFVMWIAVILSLKFACCACHVFTSQILCFWWIFRFLTDALHLNMIFTLQRVQEICLIMLDIAFGISINVLRIKQAHPKIIPLEDPLIEDDDDQKRIVRRLFLEKNGSWWDLFTFGYIGSIMKHGSVKQLELENLLTLPPEMDPFTCCENLLRCWQLQECNNYSTPSLIWSIYGVYGWPYFRLGLLKVFNDCIGFAGPLLLNRLIKSFLDTQYTFRLSKLKLKLRSSIMSVIYRKCLWVNTANRSGFSEGEIQTFMSVDADRIVNLCNSLHDLWSLPLQIGIALYLLYTQVKFAFLSGLAITILLIPVNKWISVLIASATEKMMKLKDERIRKTGELLTNIRTLKMYGWDNWFADWLKETRATEVTHLATRKYLDAWCVFFWATTPTLFSLCTFGLFALMGHQLDAATVFTCLALFNSLISPLNSFPWVINGLIDAFISTRRVSKFLCCLEHSRDFSIDSGFTSEDLAVCVEDASCTWSSNVEEDYNLTIKQVSLRVPKGSFVAVIGEVGSGKTSLLNSLLGEMRCVHGSILLNGSVAYVPQVPWLLSGTVRENILFGKPFDSKRYFETLSACALDVDISLMVGGDMACIGDKGLNLSGGQRARFALARAVYHGSDMYLLDDVLSAVDSQVGCWILQRALLGPLLNKKTRVMCTHNIQAISCADMIVVMDKGKVNWSGSVTDMPKSISPTFSLTNEFDMSSPNHLTKRKETLSIKEDGVDEISEAAADIVKLEERKEGRVEMMVYRNYAVFSGWFITIVILVSAVLMQGSRNGNDLWLSYWVDKTGKGVSHYSTSFYLMVLCIFCIINSILTLVRAFSFAFGGLKAAVHVHNALISKLINAPTQFFDQTPSGRILNRFSSDLYTIDDSLPFILNILLANFVGLLGIIVVLSYVQVLFLLLLLPFWYIYSKLQVFYRSTSRELRRLDSVSRSPIYASFTETLDGSSTIRAFKSEEHFVGRFIEHLTLYQRTSYSEIIASLWLSLRLQLLGSMIVLFVAVMAVLGSGGNFPISFGTPGLVGLALSYAAPLVSLLGSLLTSFTETEKEMVSVERVLQYMDVPQEEVSGPQSLSDKWPVHGLVEFHNVTMRYISTLPPALTQISFTIQGGMHVGVIGRTGAGKSSILNALFRLTPVCSGEILVDGKNISHLPIRELRSCLAVVPQSPFLFQGSLRDNLDPLGLSEDWRIWEILDKCKVKAAVESVGGLDSYVKESGCSFSVGQRQLLCLARALLKSSKILCLDECTANIDVHTASLLHNTISSECKGVTVITIAHRISTVVDLDSILILDRGILVEQGKPQHLLQDDSSTFSSFVRASQ.

8 helical membrane-spanning segments follow: residues 23–43 (IVLGFGANVVTLLLILILTIT), 60–80 (LLYVTPALGACLSCVDLVLLV), 88–108 (VILCFVPLSGFVMWIAVILSL), 122–142 (ILCFWWIFRFLTDALHLNMIF), 148–168 (QEICLIMLDIAFGISINVLRI), 391–411 (LSGLAITILLIPVNKWISVLI), 474–494 (VFFWATTPTLFSLCTFGLFAL), and 505–525 (FTCLALFNSLISPLNSFPWVI). The ABC transmembrane type-1 1 domain maps to 255 to 530 (CNNYSTPSLI…FPWVINGLID (276 aa)). The 228-residue stretch at 564–791 (VCVEDASCTW…ISPTFSLTNE (228 aa)) folds into the ABC transporter 1 domain. ATP is bound at residue 602–609 (GEVGSGKT). 6 helical membrane passes run 844 to 864 (AVFSGWFITIVILVSAVLMQG), 889 to 909 (TSFYLMVLCIFCIINSILTLV), 963 to 985 (SLPFILNILLANFVGLLGIIVVL), 990 to 1009 (VLFLLLLLPFWYIYSKLQVF), 1087 to 1107 (IVLFVAVMAVLGSGGNFPISF), and 1111 to 1131 (GLVGLALSYAAPLVSLLGSLL). Positions 852–1139 (TIVILVSAVL…LLTSFTETEK (288 aa)) constitute an ABC transmembrane type-1 2 domain. An ABC transporter 2 domain is found at 1174-1407 (VEFHNVTMRY…DSSTFSSFVR (234 aa)). Residue 1208–1215 (GRTGAGKS) coordinates ATP.

The protein belongs to the ABC transporter superfamily. ABCC family. Conjugate transporter (TC 3.A.1.208) subfamily. Ubiquitous.

Its subcellular location is the membrane. It carries out the reaction ATP + H2O + xenobioticSide 1 = ADP + phosphate + xenobioticSide 2.. Its function is as follows. Pump for glutathione S-conjugates. This is ABC transporter C family member 13 (ABCC13) from Arabidopsis thaliana (Mouse-ear cress).